The primary structure comprises 146 residues: MEMDKRMKSLAMTAFFGELNTLDIMALIMSIFKRHPNNTIFSVDKDGQFMIDFEYDNYKASQYLDLTLTPISGDECKTHASSIAEQLACVDIIKEDISEYIKTTPRLKRFIKKYRNRSDTRISRDTEKLKIALAKGIDYEYIKDAC.

Residues 10–32 traverse the membrane as a helical segment; the sequence is LAMTAFFGELNTLDIMALIMSIF.

The protein belongs to the orthopoxvirus OPG112 family.

It localises to the host membrane. It is found in the host cytoplasm. Contributes to the formation of crescents and immature virions (IV). Interacts with phosphatidylinositol-3-phosphate (PI3P) and phosphatidylinositol-4-phosphate (PI4P) lipids in order to form virion membranes. Mechanistically, mediates proper formation of OPG125-hexamers, and hence the honey comb lattice and spherical immature virus. This chain is Late protein OPG112 (OPG112), found in Vaccinia virus (strain Ankara) (VACV).